Here is a 345-residue protein sequence, read N- to C-terminus: MSTSQRWTQAQARALFDKPFLELLFEAQQVHRQHFTPGEVQVSTLLSIKTGACPEDCKYCPQSARYSTGLESERLMQVQQVLDAARKARDAGSTRFCMGAAWKNPHDRDMPLLEQMVQGVKAMGLETCMTLGMLNDRQVQRLAEAGLDFYNHNLDTSPEFYGSIVTTRSYQDRLDTLSKVRQAGIKVCSGGIVGLGEDIRDRAGLLVQLANLPTPPESVPINMLVKVKGTPLADNEDVDPFEFIRTIAVARIMMPRSHVRLSAGREQMNEQTQALCFMAGANSVFYGCKLLTTPNPGEDRDMALFHKLGINIERRTATQGDVAQQAQLAEELLTADTAHYYNAAR.

Residues 38 to 256 form the Radical SAM core domain; sequence GEVQVSTLLS…IAVARIMMPR (219 aa). The [4Fe-4S] cluster site is built by C53, C57, and C60. 4 residues coordinate [2Fe-2S] cluster: C97, C128, C188, and R260.

It belongs to the radical SAM superfamily. Biotin synthase family. Homodimer. The cofactor is [4Fe-4S] cluster. [2Fe-2S] cluster is required as a cofactor.

The catalysed reaction is (4R,5S)-dethiobiotin + (sulfur carrier)-SH + 2 reduced [2Fe-2S]-[ferredoxin] + 2 S-adenosyl-L-methionine = (sulfur carrier)-H + biotin + 2 5'-deoxyadenosine + 2 L-methionine + 2 oxidized [2Fe-2S]-[ferredoxin]. It functions in the pathway cofactor biosynthesis; biotin biosynthesis; biotin from 7,8-diaminononanoate: step 2/2. In terms of biological role, catalyzes the conversion of dethiobiotin (DTB) to biotin by the insertion of a sulfur atom into dethiobiotin via a radical-based mechanism. The chain is Biotin synthase from Sodalis glossinidius (strain morsitans).